The chain runs to 47 residues: Packaging protein P22 (47 aa).

A helical membrane pass occupies residues 22 to 42 (TGWLAFVGLIIVAIILWQQII).

As to quaternary structure, heterodimer of P20 and P22; further multimerizes as hexamers of heterodimers. Part of the dodecameric portal complex that is composed of the packaging efficiency factor P6, the DNA packaging ATPase P9, and the internal heterododecamer P20/P22 which spans the virion inner membrane.

The protein localises to the virion membrane. In terms of biological role, together with P22, forms the internal part of the portal complex embeded in the virion internal membrane and which plays critical roles in genome packaging and genome ejection. Both proteins multimerize as a single ring-shaped heterdodecamer arranged around a central channel and interact with the P6/P9 external part of the portal. This Enterobacteria phage PRD1 (Bacteriophage PRD1) protein is Packaging protein P22 (XXII).